Reading from the N-terminus, the 320-residue chain is Aspartate carbamoyltransferase catalytic subunit (320 aa).

Residues Arg-65 and Thr-66 each coordinate carbamoyl phosphate. L-aspartate is bound at residue Lys-93. 3 residues coordinate carbamoyl phosphate: Arg-115, His-143, and Gln-146. L-aspartate contacts are provided by Arg-176 and Arg-230. Carbamoyl phosphate is bound by residues Gly-271 and Pro-272.

This sequence belongs to the aspartate/ornithine carbamoyltransferase superfamily. ATCase family. Heterododecamer (2C3:3R2) of six catalytic PyrB chains organized as two trimers (C3), and six regulatory PyrI chains organized as three dimers (R2).

It carries out the reaction carbamoyl phosphate + L-aspartate = N-carbamoyl-L-aspartate + phosphate + H(+). The protein operates within pyrimidine metabolism; UMP biosynthesis via de novo pathway; (S)-dihydroorotate from bicarbonate: step 2/3. Functionally, catalyzes the condensation of carbamoyl phosphate and aspartate to form carbamoyl aspartate and inorganic phosphate, the committed step in the de novo pyrimidine nucleotide biosynthesis pathway. In Maricaulis maris (strain MCS10) (Caulobacter maris), this protein is Aspartate carbamoyltransferase catalytic subunit.